Consider the following 1824-residue polypeptide: E3 ubiquitin-protein ligase UBR1 (1824 aa).

The segment at 107 to 178 adopts a UBR-type zinc-finger fold; that stretch reads TVCGKVFKNG…KDQYCELHLA (72 aa). Disordered stretches follow at residues 1006 to 1043 and 1073 to 1093; these read KQAP…ENRA and ADTE…DWED. A compositionally biased stretch (basic and acidic residues) spans 1033–1043; that stretch reads EQAREERENRA. Residues 1126 to 1220 form an RING-type; atypical zinc finger; that stretch reads FKCILCFENC…VEFQCPYCRT (95 aa).

This sequence belongs to the E3 ubiquitin-protein ligase UBR1-like family.

The catalysed reaction is S-ubiquitinyl-[E2 ubiquitin-conjugating enzyme]-L-cysteine + [acceptor protein]-L-lysine = [E2 ubiquitin-conjugating enzyme]-L-cysteine + N(6)-ubiquitinyl-[acceptor protein]-L-lysine.. It functions in the pathway protein modification; protein ubiquitination. Its function is as follows. E3 ubiquitin-protein ligase which is a component of the N-end rule pathway. Recognizes and binds to proteins bearing specific N-terminal residues that are destabilizing according to the N-end rule, leading to their ubiquitination and subsequent degradation. This Drosophila melanogaster (Fruit fly) protein is E3 ubiquitin-protein ligase UBR1.